We begin with the raw amino-acid sequence, 427 residues long: Serine--tRNA ligase (427 aa).

Residue Thr-232–Glu-234 participates in L-serine binding. Arg-263 to Glu-265 is an ATP binding site. Glu-286 serves as a coordination point for L-serine. Position 350 to 353 (Glu-350 to Ser-353) interacts with ATP. Ser-385 lines the L-serine pocket.

This sequence belongs to the class-II aminoacyl-tRNA synthetase family. Type-1 seryl-tRNA synthetase subfamily. As to quaternary structure, homodimer. The tRNA molecule binds across the dimer.

The protein resides in the cytoplasm. It carries out the reaction tRNA(Ser) + L-serine + ATP = L-seryl-tRNA(Ser) + AMP + diphosphate + H(+). The enzyme catalyses tRNA(Sec) + L-serine + ATP = L-seryl-tRNA(Sec) + AMP + diphosphate + H(+). Its pathway is aminoacyl-tRNA biosynthesis; selenocysteinyl-tRNA(Sec) biosynthesis; L-seryl-tRNA(Sec) from L-serine and tRNA(Sec): step 1/1. Catalyzes the attachment of serine to tRNA(Ser). Is also able to aminoacylate tRNA(Sec) with serine, to form the misacylated tRNA L-seryl-tRNA(Sec), which will be further converted into selenocysteinyl-tRNA(Sec). This chain is Serine--tRNA ligase, found in Lacticaseibacillus casei (strain BL23) (Lactobacillus casei).